An 805-amino-acid chain; its full sequence is Probable inorganic carbon transporter subunit DabA (805 aa).

Residues cysteine 334, aspartate 336, histidine 491, and cysteine 506 each contribute to the Zn(2+) site.

It belongs to the inorganic carbon transporter (TC 9.A.2) DabA family. In terms of assembly, forms a complex with DabB. It depends on Zn(2+) as a cofactor.

Its subcellular location is the cell inner membrane. In terms of biological role, part of an energy-coupled inorganic carbon pump. The polypeptide is Probable inorganic carbon transporter subunit DabA (Ruegeria sp. (strain TM1040) (Silicibacter sp.)).